The following is a 467-amino-acid chain: ATP synthase subunit beta (467 aa).

154-161 (GGAGVGKT) contributes to the ATP binding site.

Belongs to the ATPase alpha/beta chains family. F-type ATPases have 2 components, CF(1) - the catalytic core - and CF(0) - the membrane proton channel. CF(1) has five subunits: alpha(3), beta(3), gamma(1), delta(1), epsilon(1). CF(0) has three main subunits: a(1), b(2) and c(9-12). The alpha and beta chains form an alternating ring which encloses part of the gamma chain. CF(1) is attached to CF(0) by a central stalk formed by the gamma and epsilon chains, while a peripheral stalk is formed by the delta and b chains.

It localises to the cell inner membrane. The enzyme catalyses ATP + H2O + 4 H(+)(in) = ADP + phosphate + 5 H(+)(out). Functionally, produces ATP from ADP in the presence of a proton gradient across the membrane. The catalytic sites are hosted primarily by the beta subunits. This chain is ATP synthase subunit beta, found in Petrotoga mobilis (strain DSM 10674 / SJ95).